A 434-amino-acid chain; its full sequence is Alpha-enolase (434 aa).

Serine 40 provides a ligand contact to Mg(2+). Substrate contacts are provided by histidine 158 and glutamate 167. Residue glutamate 210 is the Proton donor of the active site. The Mg(2+) site is built by aspartate 245, glutamate 293, and aspartate 318. Substrate is bound by residues glutamate 293 and aspartate 318. Lysine 343 (proton acceptor) is an active-site residue. Substrate-binding positions include 370–373 (SHRS) and lysine 394.

The protein belongs to the enolase family. In terms of assembly, homodimer. It depends on Mg(2+) as a cofactor.

It localises to the cytoplasm. The enzyme catalyses (2R)-2-phosphoglycerate = phosphoenolpyruvate + H2O. Its pathway is carbohydrate degradation; glycolysis; pyruvate from D-glyceraldehyde 3-phosphate: step 4/5. The polypeptide is Alpha-enolase (Sceloporus undulatus (Eastern fence lizard)).